Here is a 343-residue protein sequence, read N- to C-terminus: Heat-inducible transcription repressor HrcA (343 aa).

This sequence belongs to the HrcA family.

Functionally, negative regulator of class I heat shock genes (grpE-dnaK-dnaJ and groELS operons). Prevents heat-shock induction of these operons. The polypeptide is Heat-inducible transcription repressor HrcA (Mycobacterium tuberculosis (strain ATCC 25177 / H37Ra)).